A 313-amino-acid chain; its full sequence is Biotin synthase (313 aa).

The Radical SAM core domain maps to 38–262 (REVQISTLLS…TMPHARVRLS (225 aa)). Cys-53, Cys-57, and Cys-60 together coordinate [4Fe-4S] cluster. Residues Cys-97, Cys-128, Cys-188, and Arg-260 each coordinate [2Fe-2S] cluster.

The protein belongs to the radical SAM superfamily. Biotin synthase family. Homodimer. [4Fe-4S] cluster serves as cofactor. It depends on [2Fe-2S] cluster as a cofactor.

The catalysed reaction is (4R,5S)-dethiobiotin + (sulfur carrier)-SH + 2 reduced [2Fe-2S]-[ferredoxin] + 2 S-adenosyl-L-methionine = (sulfur carrier)-H + biotin + 2 5'-deoxyadenosine + 2 L-methionine + 2 oxidized [2Fe-2S]-[ferredoxin]. It functions in the pathway cofactor biosynthesis; biotin biosynthesis; biotin from 7,8-diaminononanoate: step 2/2. Its function is as follows. Catalyzes the conversion of dethiobiotin (DTB) to biotin by the insertion of a sulfur atom into dethiobiotin via a radical-based mechanism. This is Biotin synthase from Granulibacter bethesdensis (strain ATCC BAA-1260 / CGDNIH1).